Reading from the N-terminus, the 218-residue chain is Ras-related protein Rab-4A (218 aa).

GTP-binding residues include G23, T24, G25, K26, S27, C28, S42, H44, and T45. S27 serves as a coordination point for Mg(2+). A Switch 1 motif is present at residues 44-49 (HTIGVE). Mg(2+)-binding residues include T45 and D68. A Switch 2 motif is present at residues 70 to 79 (AGQERFRSVT). G71 contacts GTP. At Q72 the chain carries 5-glutamyl serotonin. GTP contacts are provided by N126, K127, D129, A157, and L158. S190 carries the phosphoserine modification. At S204 the chain carries Phosphoserine; by CDK1. S-geranylgeranyl cysteine attachment occurs at residues C216 and C218. The residue at position 218 (C218) is a Cysteine methyl ester.

The protein belongs to the small GTPase superfamily. Rab family. Interacts with SGSM1, SGSM2 and SGSM3. Interacts with RAB11FIP1, RABEP1, ZFYVE20 and RUFY1. Interacts (membrane-bound form) with NDRG1; the interaction involves NDRG1 in vesicular recycling of E-cadherin. Interacts (in GTP-bound form) with GRIPAP1 (via N-terminus). Interacts with RABEP1 and RBSN. Does not interact with HPS4. Interacts with RABEP2; this interaction may mediate VEGFR2 cell surface expression. It depends on Mg(2+) as a cofactor. In terms of processing, serotonylation of Gln-72 by TGM2 during activation and aggregation of platelets leads to constitutive activation of GTPase activity. Phosphorylated by CDK1 kinase during mitosis.

The protein resides in the membrane. It localises to the cytoplasm. Its subcellular location is the early endosome membrane. It is found in the recycling endosome membrane. The enzyme catalyses GTP + H2O = GDP + phosphate + H(+). With respect to regulation, regulated by guanine nucleotide exchange factors (GEFs) which promote the exchange of bound GDP for free GTP. Regulated by GTPase activating proteins (GAPs) which increase the GTP hydrolysis activity. Inhibited by GDP dissociation inhibitors (GDIs). Its function is as follows. The small GTPases Rab are key regulators of intracellular membrane trafficking, from the formation of transport vesicles to their fusion with membranes. Rabs cycle between an inactive GDP-bound form and an active GTP-bound form that is able to recruit to membranes different sets of downstream effectors directly responsible for vesicle formation, movement, tethering and fusion. RAB4A is involved in protein transport. Also plays a role in vesicular traffic. Mediates VEGFR2 endosomal trafficking to enhance VEGFR2 signaling. Acts as a regulator of platelet alpha-granule release during activation and aggregation of platelets. This is Ras-related protein Rab-4A from Rattus norvegicus (Rat).